Here is a 329-residue protein sequence, read N- to C-terminus: Probable carboxylesterase 8 (329 aa).

The Involved in the stabilization of the negatively charged intermediate by the formation of the oxyanion hole signature appears at 73-75 (HGG). Catalysis depends on residues serine 161, aspartate 264, and histidine 294.

The protein belongs to the 'GDXG' lipolytic enzyme family. In terms of tissue distribution, expressed in leaves, stems, flowers and siliques.

The catalysed reaction is a carboxylic ester + H2O = an alcohol + a carboxylate + H(+). Functionally, carboxylesterase acting on esters with varying acyl chain length. The chain is Probable carboxylesterase 8 (CXE8) from Arabidopsis thaliana (Mouse-ear cress).